The sequence spans 53 residues: Metallocarboxypeptidase inhibitor (53 aa).

Intrachain disulfides connect cysteine 9/cysteine 23, cysteine 15/cysteine 51, and cysteine 27/cysteine 38. Residue alanine 53 coordinates Zn(2+).

As to quaternary structure, monomer. Interacts (via C-terminus) with human CPA4.

Its function is as follows. Metallocarboxypeptidase inhibitor. Has an inhibitory effect on bovine CPA1 and CPB2, human CPA1, CPA2, CPA4, CPB1 and CPB2, and porcine CPB1. Does not inhibit D.melanogaster svr (carboxypeptidase D). Shows no activity against serine proteases subtilisin or bovine trypsin, cysteine protease papain, and aspartyl protease porcine pepsin. The chain is Metallocarboxypeptidase inhibitor from Nerita versicolor (Four-tooth nerite).